A 202-amino-acid polypeptide reads, in one-letter code: Na(+)-translocating NADH-quinone reductase subunit E (202 aa).

Helical transmembrane passes span 11–31, 35–55, 81–101, 114–134, 144–164, and 180–200; these read SVFIENMALAFFLGMCTFIAI, VETAIGLGIAVVVVQAITVPA, FLGFLSYIGVIAAIVQILEML, GIYLPLITVNCAIMAGSLFMV, VVYGIGSGFSWALAIALLAGI, and LGIAFITIGLMSLGFMSFSGI.

It belongs to the NqrDE/RnfAE family. As to quaternary structure, composed of six subunits; NqrA, NqrB, NqrC, NqrD, NqrE and NqrF.

It is found in the cell inner membrane. The catalysed reaction is a ubiquinone + n Na(+)(in) + NADH + H(+) = a ubiquinol + n Na(+)(out) + NAD(+). Functionally, NQR complex catalyzes the reduction of ubiquinone-1 to ubiquinol by two successive reactions, coupled with the transport of Na(+) ions from the cytoplasm to the periplasm. NqrA to NqrE are probably involved in the second step, the conversion of ubisemiquinone to ubiquinol. This is Na(+)-translocating NADH-quinone reductase subunit E from Azotobacter vinelandii (strain DJ / ATCC BAA-1303).